Here is a 105-residue protein sequence, read N- to C-terminus: UPF0122 protein OB1530 (105 aa).

This sequence belongs to the UPF0122 family.

Its function is as follows. Might take part in the signal recognition particle (SRP) pathway. This is inferred from the conservation of its genetic proximity to ftsY/ffh. May be a regulatory protein. This Oceanobacillus iheyensis (strain DSM 14371 / CIP 107618 / JCM 11309 / KCTC 3954 / HTE831) protein is UPF0122 protein OB1530.